A 362-amino-acid polypeptide reads, in one-letter code: DNA replication and repair protein RecF (362 aa).

Residue 30-37 participates in ATP binding; sequence GDNGAGKT.

It belongs to the RecF family.

It is found in the cytoplasm. Its function is as follows. The RecF protein is involved in DNA metabolism; it is required for DNA replication and normal SOS inducibility. RecF binds preferentially to single-stranded, linear DNA. It also seems to bind ATP. The protein is DNA replication and repair protein RecF of Xanthomonas oryzae pv. oryzae (strain MAFF 311018).